The primary structure comprises 882 residues: ABC transporter H family member 4 (882 aa).

Helical transmembrane passes span 4 to 24 (WIKLKLTAIGWFIYGMPISVF), 35 to 55 (LLFKTIAVHYIIPLIIELLPW), and 79 to 101 (TNGPYSHSAVIKYVLLTIYYAIL). An ABC transporter domain is found at 384 to 863 (FSYENKFSSE…NAQVYYKLLG (480 aa)). Position 418 to 425 (418 to 425 (GQNRSGKS)) interacts with ATP. Disordered regions lie at residues 522-617 (FDPD…YSTI), 634-669 (SMSQLNNSGGGNVNGNNNNNNNNNNNNNININNSGV), and 710-730 (NSGGGDESDDDDEEAERNQRS). 2 stretches are compositionally biased toward low complexity: residues 528 to 617 (IPPT…YSTI) and 647 to 667 (NGNNNNNNNNNNNNNININNS). Residues 715 to 724 (DESDDDDEEA) are compositionally biased toward acidic residues.

This sequence belongs to the ABC transporter superfamily. ABCH family.

It is found in the membrane. The sequence is that of ABC transporter H family member 4 (abcH4) from Dictyostelium discoideum (Social amoeba).